The sequence spans 315 residues: Olfactory receptor 5M1 (315 aa).

Residues 1–25 (MFSPNHTIVTEFILLGLTDDPVLEK) lie on the Extracellular side of the membrane. Asn-5 carries an N-linked (GlcNAc...) asparagine glycan. A helical membrane pass occupies residues 26–46 (ILFGVFLAIYLITLAGNLCMI). The Cytoplasmic segment spans residues 47–54 (LLIRTNSH). A helical membrane pass occupies residues 55 to 75 (LQTPMYFFLGHLSFVDICYSS). Residues 76–99 (NVTPNMLHNFLSEQKTISYAGCFT) are Extracellular-facing. The cysteines at positions 97 and 189 are disulfide-linked. The helical transmembrane segment at 100 to 120 (QCLLFIALVITEFYILASMAL) threads the bilayer. Residues 121–139 (DRYVAICSPLHYSSRMSKN) are Cytoplasmic-facing. The chain crosses the membrane as a helical span at residues 140-160 (ICVCLVTIPYMYGFLSGFSQS). The Extracellular portion of the chain corresponds to 161 to 196 (LLTFHLSFCGSLEINHFYCADPPLIMLACSDTRVKK). Residues 197 to 217 (MAMFVVAGFNLSSSLFIILLS) form a helical membrane-spanning segment. The Cytoplasmic segment spans residues 218–237 (YLFIFAAIFRIRSAEGRHKA). The helical transmembrane segment at 238-258 (FSTCASHLTIVTLFYGTLFCM) threads the bilayer. Residues 259–271 (YVRPPSEKSVEES) lie on the Extracellular side of the membrane. The chain crosses the membrane as a helical span at residues 272-292 (KITAVFYTFLSPMLNPLIYSL). At 293 to 315 (RNTDVILAMQQMIRGKSFHKIAV) the chain is on the cytoplasmic side.

The protein belongs to the G-protein coupled receptor 1 family.

Its subcellular location is the cell membrane. In terms of biological role, odorant receptor. The chain is Olfactory receptor 5M1 (OR5M1) from Homo sapiens (Human).